The sequence spans 21 residues: AGEDVSHELEEKEKALANHSE.

Residues 1 to 21 (AGEDVSHELEEKEKALANHSE) are disordered.

Morphogenetically active peptide. Active in foot development. This Hydra vulgaris (Hydra) protein is Pedibin.